The chain runs to 293 residues: Glutamyl-Q tRNA(Asp) synthetase (293 aa).

L-glutamate is bound by residues 26–30 (RFAPS) and D62. The short motif at 29 to 39 (PSPTGLLHLGN) is the 'HIGH' region element. Zn(2+) contacts are provided by C118, C120, Y131, and C135. Positions 178 and 196 each coordinate L-glutamate. A 'KMSKS' region motif is present at residues 234–238 (KLSKR). K237 is a binding site for ATP.

It belongs to the class-I aminoacyl-tRNA synthetase family. GluQ subfamily. It depends on Zn(2+) as a cofactor.

Its function is as follows. Catalyzes the tRNA-independent activation of glutamate in presence of ATP and the subsequent transfer of glutamate onto a tRNA(Asp). Glutamate is transferred on the 2-amino-5-(4,5-dihydroxy-2-cyclopenten-1-yl) moiety of the queuosine in the wobble position of the QUC anticodon. The sequence is that of Glutamyl-Q tRNA(Asp) synthetase from Synechococcus sp. (strain CC9605).